Reading from the N-terminus, the 344-residue chain is L-rhamnose-proton symporter (344 aa).

Transmembrane regions (helical) follow at residues 4–24, 38–58, 68–88, 101–121, 137–157, 175–195, 214–234, 259–279, 290–310, and 321–341; these read AITM…CFYA, WSVG…ALLL, FNLS…IGNI, MGIG…TPII, TLLG…AGQL, LLLA…MNAA, LPSY…FCFI, ILLS…YAWG, MSWM…GLVL, and VAVL…VGLG.

This sequence belongs to the L-rhamnose transporter (TC 2.A.7.6) family.

It is found in the cell inner membrane. It carries out the reaction L-rhamnopyranose(in) + H(+)(in) = L-rhamnopyranose(out) + H(+)(out). Functionally, uptake of L-rhamnose across the cytoplasmic membrane with the concomitant transport of protons into the cell (symport system). This is L-rhamnose-proton symporter from Salmonella paratyphi A (strain ATCC 9150 / SARB42).